A 416-amino-acid chain; its full sequence is 2-aminoadipate transaminase (416 aa).

Residues 102-103 (GA) and glutamine 233 each bind pyridoxal 5'-phosphate. Lysine 259 carries the post-translational modification N6-(pyridoxal phosphate)lysine. Threonine 288 is a binding site for pyridoxal 5'-phosphate.

This sequence belongs to the class-III pyridoxal-phosphate-dependent aminotransferase family. Pyridoxal 5'-phosphate is required as a cofactor.

The catalysed reaction is L-2-aminoadipate + 2-oxoglutarate = 2-oxoadipate + L-glutamate. It catalyses the reaction 5-aminopentanoate + 2-oxoglutarate = 5-oxopentanoate + L-glutamate. It functions in the pathway amino-acid degradation. Its function is as follows. Catalyzes the conversion of 2-aminoadipate (2AA) to 2-oxoadipate (2OA). Is most active on L-2-aminoadipate (L-2AA) and shows only weak activity on the enantiomer, D-2-aminoadipate (D-2AA). Shows moderate activity on 5-aminovalerate (5AVA) and weak activity toward 4-aminobutyrate (GABA). Is involved in a D-lysine catabolic pathway. The polypeptide is 2-aminoadipate transaminase (Pseudomonas putida (strain ATCC 47054 / DSM 6125 / CFBP 8728 / NCIMB 11950 / KT2440)).